Consider the following 200-residue polypeptide: Dephospho-CoA kinase (200 aa).

The DPCK domain maps to 4-200 (TIGLTGSVAT…TFIERFVNNK (197 aa)). Residue 12-17 (ATGKST) participates in ATP binding.

This sequence belongs to the CoaE family.

It localises to the cytoplasm. The catalysed reaction is 3'-dephospho-CoA + ATP = ADP + CoA + H(+). The protein operates within cofactor biosynthesis; coenzyme A biosynthesis; CoA from (R)-pantothenate: step 5/5. Functionally, catalyzes the phosphorylation of the 3'-hydroxyl group of dephosphocoenzyme A to form coenzyme A. This Listeria innocua serovar 6a (strain ATCC BAA-680 / CLIP 11262) protein is Dephospho-CoA kinase.